The chain runs to 1049 residues: Multidrug efflux pump subunit AcrB (1049 aa).

The Cytoplasmic segment spans residues 1 to 9 (MPNFFIDRP). The helical transmembrane segment at 10-28 (IFAWVIAIIIMLAGGLAIL) threads the bilayer. Residues 29–336 (KLPVAQYPTI…YDTTPFVKIS (308 aa)) are Periplasmic-facing. Residues 337-356 (IHEVVKTLVEAIILVFLVMY) traverse the membrane as a helical segment. Residues 357 to 365 (LFLQNFRAT) lie on the Cytoplasmic side of the membrane. A helical membrane pass occupies residues 366–385 (LIPTIAVPVVLLGTFAVLAA). Topologically, residues 386–391 (FGFSIN) are periplasmic. The helical transmembrane segment at 392–413 (TLTMFGMVLAIGLLVDDAIVVV) threads the bilayer. At 414-438 (ENVERVMAEEGLPPKEATRKSMGQI) the chain is on the cytoplasmic side. A helical transmembrane segment spans residues 439-457 (QGALVGIAMVLSAVFVPMA). The Periplasmic segment spans residues 458–465 (FFGGSTGA). The chain crosses the membrane as a helical span at residues 466–490 (IYRQFSITIVSAMALSVLVALILTP). Topologically, residues 491–538 (ALCATMLKPIAKGDHGEGKKGFFGWFNRMFEKSTHHYTDSVGGILRST) are cytoplasmic. Residues 539–555 (GRYLVLYLIIVVGMAYL) traverse the membrane as a helical segment. Residues 556–871 (FVRLPSSFLP…MSYQERLSGN (316 aa)) are Periplasmic-facing. Residues 872–888 (QAPSLYAISLIVVFLCL) traverse the membrane as a helical segment. The Cytoplasmic segment spans residues 889–898 (AALYESWSIP). Residues 899–918 (FSVMLVVPLGVIGALLAATF) form a helical membrane-spanning segment. Topologically, residues 919-924 (RGLTND) are periplasmic. A helical membrane pass occupies residues 925–943 (VYFQVGLLTTIGLSAKNAI). At 944–972 (LIVEFAKDLMDKEGKGLIEATLDAVRMRL) the chain is on the cytoplasmic side. A helical membrane pass occupies residues 973 to 992 (RPILMTSLAFILGVMPLVIS). Residues 993–998 (TGAGSG) are Periplasmic-facing. A helical transmembrane segment spans residues 999-1018 (AQNAVGTGVMGGMVTATVLA). Topologically, residues 1019-1049 (IFFVPVFFVVVRRRFSRKNEDIEHSHTVDHH) are cytoplasmic.

It belongs to the resistance-nodulation-cell division (RND) (TC 2.A.6) family. As to quaternary structure, homotrimer, with large domains that extend into the periplasm, interacts with AcrA and TolC. AcrA may be required to stably link this protein and TolC. Interacts with AcrZ. Part of the AcrA-AcrB-AcrZ-TolC efflux pump.

It is found in the cell inner membrane. In terms of biological role, acrA-AcrB-AcrZ-TolC is a drug efflux protein complex with broad substrate specificity that uses the proton motive force to export substrates. (Microbial infection) Involved in contact-dependent growth inhibition (CDI), acts downstream of BamA, the receptor for CDI. Its role in CDI is independent of the AcrA-AcrB-TolC efflux pump complex. The chain is Multidrug efflux pump subunit AcrB (acrB) from Escherichia coli (strain K12).